We begin with the raw amino-acid sequence, 2523 residues long: Non-reducing polyketide synthase Preu3 (2523 aa).

The segment at 58 to 247 (LQSLASERRA…KILAMTGSFH (190 aa)) is N-terminal acylcarrier protein transacylase domain (SAT). A Ketosynthase family 3 (KS3) domain is found at 373 to 792 (DNAVAVVGMA…GSNGAMIVCQ (420 aa)). Active-site for beta-ketoacyl synthase activity residues include C539, H674, and H715. The segment at 900-1207 (CFGGQVKAFV…KAFGSLADAT (308 aa)) is malonyl-CoA:ACP transacylase (MAT) domain. S986 functions as the For acyl/malonyl transferase activity in the catalytic mechanism. Residues 1271–1398 (HELLTFSSFE…GLVAFGGTVE (128 aa)) are N-terminal hotdog fold. A PKS/mFAS DH domain is found at 1271 to 1573 (HELLTFSSFE…FTRVTVPGLR (303 aa)). The interval 1301–1568 (LVKGHAVVAQ…ALGCRFTRVT (268 aa)) is product template (PT) domain. H1305 acts as the Proton acceptor; for dehydratase activity in catalysis. Positions 1421–1573 (ECDALRGSAT…FTRVTVPGLR (153 aa)) are C-terminal hotdog fold. D1483 (proton donor; for dehydratase activity) is an active-site residue. The segment at 1579-1601 (ANGDARAQERPSGSRISPSPLAP) is disordered. One can recognise a Carrier domain in the interval 1639–1713 (VDYLAQVKAL…KLAEYLAKTL (75 aa)). S1673 carries the O-(pantetheine 4'-phosphoryl)serine modification. The tract at residues 1735–1757 (DAEQSSDESPYDSTDDSASGYGD) is disordered. Residues 1738–1749 (QSSDESPYDSTD) show a composition bias toward acidic residues. The segment at 1986–2085 (LEIGGGTGGT…MRQLLSSEGF (100 aa)) is methyltransferase (CMeT) domain. The interval 2218-2520 (LILHGGGHVL…RALEWLVEQC (303 aa)) is thioesterase (TE) domain.

Requires pantetheine 4'-phosphate as cofactor.

It catalyses the reaction 3 malonyl-CoA + acetyl-CoA + S-adenosyl-L-methionine + H(+) = 3-methylorsellinate + S-adenosyl-L-homocysteine + 3 CO2 + 4 CoA. Its function is as follows. Non-reducing polyketide synthase; part of a gene cluster that mediates the biosynthesis of a yet unidentified natural product. The first step in the pathway is performed by Preu3 that condenses one acetyl-CoA starter unit with 3 malonyl-CoA units. Preu3 also catalyzes one methylation step to produce 3-methylorsellinate, an intermediate that exhibits significant antibacterial activities against methicillin-resistant Staphylococcus aureus, multidrug-resistant Enterococcus faecalis, multidrug-resistant Enterococcus faecium, and multidrug-resistant Staphylococcus epidermidis. The protein is Non-reducing polyketide synthase Preu3 of Preussia isomera (Coprophilous fungus).